The sequence spans 406 residues: 11-beta-hydroxysteroid dehydrogenase type 2 (406 aa).

82 to 111 lines the NAD(+) pocket; it reads TRAVLITGCDSGFGKETAKKLDAMGFTVLA. A substrate-binding site is contributed by S219. Y232 (proton acceptor) is an active-site residue. Positions 379–406 are disordered; that stretch reads GQPGATPAPDTAQDNPNPNPDPSLVGAR.

Belongs to the short-chain dehydrogenases/reductases (SDR) family. Interacts with ligand-free cytoplasmic NR3C2. In terms of tissue distribution, highly expressed in the kidney.

Its subcellular location is the microsome. It localises to the endoplasmic reticulum. The catalysed reaction is an 11beta-hydroxysteroid + NAD(+) = an 11-oxosteroid + NADH + H(+). The enzyme catalyses corticosterone + NAD(+) = 11-dehydrocorticosterone + NADH + H(+). It carries out the reaction cortisol + NAD(+) = cortisone + NADH + H(+). It catalyses the reaction 11beta,17beta-dihydroxyandrost-4-ene-3-one + NAD(+) = 17beta-hydroxyandrost-4-ene-3,11-dione + NADH + H(+). The catalysed reaction is 11beta-hydroxyandrost-4-ene-3,17-dione + NAD(+) = androst-4-ene-3,11,17-trione + NADH + H(+). The protein operates within steroid metabolism. Its activity is regulated as follows. Inhibited by carbenoloxone. Catalyzes the conversion of biologically active 11beta-hydroxyglucocorticoids (11beta-hydroxysteroid) such as corticosterone, to inactive 11-ketoglucocorticoids (11-oxosteroid) such as 11-dehydrocorticosterone, in the presence of NAD(+). Functions as a dehydrogenase (oxidase), thereby decreasing the concentration of active glucocorticoids, thus protecting the nonselective mineralocorticoid receptor from occupation by glucocorticoids. Plays an important role in maintaining glucocorticoids balance during preimplantation and protects the fetus from excessive maternal corticosterone exposure. Catalyzes the oxidation of 11beta-hydroxytestosterone (11beta,17beta-dihydroxyandrost-4-ene-3-one) to 11-ketotestosterone (17beta-hydroxyandrost-4-ene-3,11-dione), a major bioactive androgen. Catalyzes the conversion of 11beta-hydroxyandrostenedione (11beta-hydroxyandrost-4-ene-3,17-dione) to 11-ketoandrostenedione (androst-4-ene-3,11,17-trione), which can be further metabolized to 11-ketotestosterone. Converts 7-beta-25-dihydroxycholesterol to 7-oxo-25-hydroxycholesterol in vitro. 7-beta-25-dihydroxycholesterol (not 7-oxo-25-hydroxycholesterol) acts as a ligand for the G-protein-coupled receptor (GPCR) Epstein-Barr virus-induced gene 2 (EBI2) and may thereby regulate immune cell migration. May protect ovulating oocytes and fertilizing spermatozoa from the adverse effects of cortisol. In Oryctolagus cuniculus (Rabbit), this protein is 11-beta-hydroxysteroid dehydrogenase type 2 (HSD11B2).